A 131-amino-acid chain; its full sequence is Peptidyl-prolyl cis-trans isomerase NIMA-interacting 4 (131 aa).

The segment at 1-25 (MPPKGKSGSGKGGKGKAASGSESSE) is necessary for nuclear localization and DNA-binding. The disordered stretch occupies residues 1 to 37 (MPPKGKSGSGKGGKGKAASGSESSEKKAQGPKGGGNA). Residues 1–41 (MPPKGKSGSGKGGKGKAASGSESSEKKAQGPKGGGNAVKVR) are necessary for association with the pre-rRNP complexes. At Ser19 the chain carries Phosphoserine; by CK2. Residues 35-129 (GNAVKVRHIL…FGYHIIMVEG (95 aa)) form the PpiC domain.

It belongs to the PpiC/parvulin rotamase family. PIN4 subfamily. Found in pre-ribosomal ribonucleoprotein (pre-rRNP) complexes. Post-translationally, phosphorylated. Phosphorylation occurs both in the nucleus and the cytoplasm. Phosphorylation at Ser-19 does not affect its PPIase activity but is required for nuclear localization, and the dephosphorylation is a prerequisite for the binding to DNA. The unphosphorylated form associates with the pre-rRNP complexes in the nucleus.

The protein localises to the nucleus. It is found in the nucleolus. It localises to the cytoplasm. Its subcellular location is the cytoskeleton. The protein resides in the spindle. The catalysed reaction is [protein]-peptidylproline (omega=180) = [protein]-peptidylproline (omega=0). In terms of biological role, involved as a ribosomal RNA processing factor in ribosome biogenesis. Binds to tightly bent AT-rich stretches of double-stranded DNA. In Bos taurus (Bovine), this protein is Peptidyl-prolyl cis-trans isomerase NIMA-interacting 4 (PIN4).